We begin with the raw amino-acid sequence, 466 residues long: Anthocyanidin 3-O-glucosyltransferase 1 (466 aa).

Catalysis depends on histidine 22, which acts as the Proton acceptor. The an anthocyanidin site is built by histidine 22 and glutamine 87. Catalysis depends on aspartate 122, which acts as the Charge relay. UDP-alpha-D-glucose is bound at residue threonine 145. Histidine 154 lines the an anthocyanidin pocket. Alanine 346, glutamine 348, histidine 363, tryptophan 366, asparagine 367, serine 368, and glutamate 371 together coordinate UDP-alpha-D-glucose. Glycine 386 lines the an anthocyanidin pocket. Residues aspartate 387 and glutamine 388 each contribute to the UDP-alpha-D-glucose site.

It belongs to the UDP-glycosyltransferase family. As to expression, highest expression detected in receptacles and achenes, with very low levels detected in runners, leaves, flowers, crowns and green receptacles.

The catalysed reaction is an anthocyanidin + UDP-alpha-D-glucose + H(+) = an anthocyanidin 3-O-beta-D-glucoside + UDP. It carries out the reaction cyanidin + UDP-alpha-D-glucose = cyanidin 3-O-beta-D-glucoside + UDP + H(+). The enzyme catalyses pelargonidin + UDP-alpha-D-glucose = pelargonidin 3-O-beta-D-glucoside + UDP. It catalyses the reaction peonidin + UDP-alpha-D-glucose = peonidin 3-O-beta-D-glucoside + UDP. The catalysed reaction is delphinidin + UDP-alpha-D-glucose = delphinidin 3-O-beta-D-glucoside + UDP. It carries out the reaction a flavonol + UDP-alpha-D-glucose = a flavonol 3-O-beta-D-glucoside + UDP + H(+). It participates in pigment biosynthesis; anthocyanin biosynthesis. In the presence of other necessary color factors, this glycosylation reaction allows the accumulation of anthocyanin pigments. Uses UDP-Glc as a sugar donor, but not UDP-Gal or UDP-GlcUA. Anthocyanidins are the preferred substrates in vivo, but flavonols can also be glucosylated in vitro. The polypeptide is Anthocyanidin 3-O-glucosyltransferase 1 (Fragaria ananassa (Strawberry)).